The primary structure comprises 113 residues: Ig heavy chain V-III region A4 (113 aa).

The 113-residue stretch at 1–113 (EVKLEESGGG…YWGQGTLVTV (113 aa)) folds into the Ig-like domain. C22 and C98 are joined by a disulfide.

This is Ig heavy chain V-III region A4 from Mus musculus (Mouse).